We begin with the raw amino-acid sequence, 203 residues long: Histidine biosynthesis bifunctional protein HisIE (203 aa).

The tract at residues 1–114 is phosphoribosyl-AMP cyclohydrolase; the sequence is MLTEQQRREL…FGDTAHQWLF (114 aa). The segment at 115–203 is phosphoribosyl-ATP pyrophosphohydrolase; sequence LYQLEQLLAE…VIENLRKRHQ (89 aa).

This sequence in the N-terminal section; belongs to the PRA-CH family. It in the C-terminal section; belongs to the PRA-PH family.

The protein localises to the cytoplasm. It catalyses the reaction 1-(5-phospho-beta-D-ribosyl)-ATP + H2O = 1-(5-phospho-beta-D-ribosyl)-5'-AMP + diphosphate + H(+). It carries out the reaction 1-(5-phospho-beta-D-ribosyl)-5'-AMP + H2O = 1-(5-phospho-beta-D-ribosyl)-5-[(5-phospho-beta-D-ribosylamino)methylideneamino]imidazole-4-carboxamide. The protein operates within amino-acid biosynthesis; L-histidine biosynthesis; L-histidine from 5-phospho-alpha-D-ribose 1-diphosphate: step 2/9. It functions in the pathway amino-acid biosynthesis; L-histidine biosynthesis; L-histidine from 5-phospho-alpha-D-ribose 1-diphosphate: step 3/9. The polypeptide is Histidine biosynthesis bifunctional protein HisIE (Escherichia coli O6:H1 (strain CFT073 / ATCC 700928 / UPEC)).